The sequence spans 505 residues: Glutamate--tRNA ligase (505 aa).

Residues 12–22 carry the 'HIGH' region motif; the sequence is PSPTGALHIGG. Positions 260–264 match the 'KMSKS' region motif; it reads KLSKR. Residue Lys-263 participates in ATP binding.

This sequence belongs to the class-I aminoacyl-tRNA synthetase family. Glutamate--tRNA ligase type 1 subfamily. As to quaternary structure, monomer.

The protein localises to the cytoplasm. The catalysed reaction is tRNA(Glu) + L-glutamate + ATP = L-glutamyl-tRNA(Glu) + AMP + diphosphate. Catalyzes the attachment of glutamate to tRNA(Glu) in a two-step reaction: glutamate is first activated by ATP to form Glu-AMP and then transferred to the acceptor end of tRNA(Glu). The protein is Glutamate--tRNA ligase of Parabacteroides distasonis (strain ATCC 8503 / DSM 20701 / CIP 104284 / JCM 5825 / NCTC 11152).